Consider the following 377-residue polypeptide: Queuine tRNA-ribosyltransferase (377 aa).

The active-site Proton acceptor is the aspartate 89. Substrate contacts are provided by residues 89–93 (DSGGF), aspartate 143, glutamine 187, and glycine 214. The tract at residues 245–251 (GVGKPED) is RNA binding. Residue aspartate 264 is the Nucleophile of the active site. The interval 269 to 273 (TRNAR) is RNA binding; important for wobble base 34 recognition. 4 residues coordinate Zn(2+): cysteine 302, cysteine 304, cysteine 307, and histidine 333.

The protein belongs to the queuine tRNA-ribosyltransferase family. As to quaternary structure, homodimer. Within each dimer, one monomer is responsible for RNA recognition and catalysis, while the other monomer binds to the replacement base PreQ1. It depends on Zn(2+) as a cofactor.

The enzyme catalyses 7-aminomethyl-7-carbaguanine + guanosine(34) in tRNA = 7-aminomethyl-7-carbaguanosine(34) in tRNA + guanine. It participates in tRNA modification; tRNA-queuosine biosynthesis. Its function is as follows. Catalyzes the base-exchange of a guanine (G) residue with the queuine precursor 7-aminomethyl-7-deazaguanine (PreQ1) at position 34 (anticodon wobble position) in tRNAs with GU(N) anticodons (tRNA-Asp, -Asn, -His and -Tyr). Catalysis occurs through a double-displacement mechanism. The nucleophile active site attacks the C1' of nucleotide 34 to detach the guanine base from the RNA, forming a covalent enzyme-RNA intermediate. The proton acceptor active site deprotonates the incoming PreQ1, allowing a nucleophilic attack on the C1' of the ribose to form the product. After dissociation, two additional enzymatic reactions on the tRNA convert PreQ1 to queuine (Q), resulting in the hypermodified nucleoside queuosine (7-(((4,5-cis-dihydroxy-2-cyclopenten-1-yl)amino)methyl)-7-deazaguanosine). This is Queuine tRNA-ribosyltransferase from Shewanella denitrificans (strain OS217 / ATCC BAA-1090 / DSM 15013).